The chain runs to 33 residues: Brevinin-2Eb (33 aa).

Cys-27 and Cys-33 are joined by a disulfide.

This sequence belongs to the frog skin active peptide (FSAP) family. Brevinin subfamily. Expressed by the skin glands.

It localises to the secreted. Functionally, shows antibacterial activity against representative Gram-negative and Gram-positive bacterial species, and hemolytic activity. This Pelophylax lessonae (Pool frog) protein is Brevinin-2Eb.